A 284-amino-acid chain; its full sequence is Pseudouridine-5'-phosphate glycosidase (284 aa).

E8 serves as the catalytic Proton donor. Substrate is bound by residues K69 and V89. D119 provides a ligand contact to Mn(2+). 121-123 (SQD) provides a ligand contact to substrate. K140 serves as the catalytic Nucleophile.

Belongs to the pseudouridine-5'-phosphate glycosidase family. As to quaternary structure, homotrimer. Mn(2+) is required as a cofactor.

The enzyme catalyses D-ribose 5-phosphate + uracil = psi-UMP + H2O. Its function is as follows. Catalyzes the reversible cleavage of pseudouridine 5'-phosphate (PsiMP) to ribose 5-phosphate and uracil. Functions biologically in the cleavage direction, as part of a pseudouridine degradation pathway. In Pseudothermotoga lettingae (strain ATCC BAA-301 / DSM 14385 / NBRC 107922 / TMO) (Thermotoga lettingae), this protein is Pseudouridine-5'-phosphate glycosidase.